A 267-amino-acid chain; its full sequence is Hydroxynaphthalene reductase-like protein Arp2 (267 aa).

Residues Ile25, Asn45, Asp71, and Asn98 each contribute to the NADP(+) site. Residues Ser147 and Ser148 each act as proton donor in the active site. 4 residues coordinate NADP(+): Tyr162, Lys166, Val195, and Thr197. Tyr162 acts as the Proton acceptor in catalysis. The active-site Lowers pKa of active site Tyr is the Lys166.

The protein belongs to the short-chain dehydrogenases/reductases (SDR) family.

Functionally, hydroxynaphthalene reductase-like protein; part of the Pks2 gene cluster that mediates the formation of infectious structures (appressoria), enabling these fungi to kill insects faster. The product of the Pks2 gene cluster is different from the one of Pks1 and has still not been identified. This chain is Hydroxynaphthalene reductase-like protein Arp2, found in Metarhizium anisopliae (strain ARSEF 549).